Consider the following 362-residue polypeptide: Poly(rC)-binding protein 2 (362 aa).

2 consecutive KH domains span residues 13-75 (TLTI…FAMI) and 97-162 (PVTL…VKQI). K115 participates in a covalent cross-link: Glycyl lysine isopeptide (Lys-Gly) (interchain with G-Cter in SUMO2). The residue at position 169 (S169) is a Phosphoserine. A Glycyl lysine isopeptide (Lys-Gly) (interchain with G-Cter in SUMO2) cross-link involves residue K181. Phosphoserine occurs at positions 185 and 268. The 65-residue stretch at 284–348 (TTSHELTIPN…ASISLAQYLI (65 aa)) folds into the KH 3 domain. K319 participates in a covalent cross-link: Glycyl lysine isopeptide (Lys-Gly) (interchain with G-Cter in SUMO2). Residues S361 and S362 each carry the phosphoserine modification.

Identified in a mRNP complex, at least composed of DHX9, DDX3X, ELAVL1, HNRNPU, IGF2BP1, ILF3, PABPC1, PCBP2, PTBP2, STAU1, STAU2, SYNCRIP and YBX1. Interacts with IFIH1 and RNF135. Interacts with MAVS (via C-terminus) and ITCH (via WW domains). Interacts with CGAS; preventing the formation of liquid-like droplets in which CGAS is activated. Phosphorylated. The non-phosphorylated form(s) exhibited the strongest poly(rC)-binding activity.

The protein localises to the nucleus. The protein resides in the cytoplasm. Its function is as follows. Single-stranded nucleic acid binding protein that binds preferentially to oligo dC. Major cellular poly(rC)-binding protein. Also binds poly(rU). Acts as a negative regulator of antiviral signaling. Negatively regulates cellular antiviral responses mediated by MAVS signaling. It acts as an adapter between MAVS and the E3 ubiquitin ligase ITCH, therefore triggering MAVS ubiquitination and degradation. Negativeley regulates the cGAS-STING pathway via interaction with CGAS, preventing the formation of liquid-like droplets in which CGAS is activated. Together with PCBP1, required for erythropoiesis, possibly by regulating mRNA splicing. The chain is Poly(rC)-binding protein 2 (Pcbp2) from Mus musculus (Mouse).